The primary structure comprises 213 residues: MICGVDEAGKGSVLGPMVIAGVGVGSTEMIDGFGLRDSKQLSPSERERLFVLIKKKCKVATVVISAAEIDAFRREMTLNTCVARAHAVVIAQLAPEIAYVDACDVNPFRYAETVRGYLSSPCEIVSEHHADSTYPVVSAASIVAKVTRDREIAKLAKKYGQIGSGYPSDPETIAYLNAYIDEHRIPPPIARKSWKTVSTLLAKKTQSSLTSFF.

Residues 1 to 206 enclose the RNase H type-2 domain; the sequence is MICGVDEAGK…VSTLLAKKTQ (206 aa). Residues Asp-6, Glu-7, and Asp-101 each contribute to the a divalent metal cation site.

Belongs to the RNase HII family. The cofactor is Mn(2+). Mg(2+) is required as a cofactor.

The protein resides in the cytoplasm. It carries out the reaction Endonucleolytic cleavage to 5'-phosphomonoester.. Its function is as follows. Endonuclease that specifically degrades the RNA of RNA-DNA hybrids. The polypeptide is Ribonuclease HII (Methanoregula boonei (strain DSM 21154 / JCM 14090 / 6A8)).